We begin with the raw amino-acid sequence, 233 residues long: Bcl-2-like protein 1 (233 aa).

A BH4 motif is present at residues 4–24 (SNRELVVDFLSYKLSQKGYSW). The segment at 29–71 (DVEENRTEAPEGTESEAETPSAINGNPSWHLADSPAVNGATGH) is disordered. Position 49 is a phosphoserine; by PLK3 (serine 49). The residue at position 62 (serine 62) is a Phosphoserine; by CDK1. The BH3 motif lies at 86–100 (VKQALREAGDEFELR). The BH1 signature appears at 129-148 (ELFRDGVNWGRIVAFFSFGG). The short motif at 180 to 195 (PWIQENGGWDTFVELY) is the BH2 element. Residues 210-226 (FNRWFLTGMTLAGVVLL) form a helical membrane-spanning segment.

This sequence belongs to the Bcl-2 family. In terms of assembly, homodimer. Heterodimers with BAX, BAK or BCL2. Heterodimerization with BAX does not seem to be required for anti-apoptotic activity. Interacts with BCL2L11. Interacts with BAD. Interacts with SIVA1 isoform 1; the interaction inhibits the anti-apoptotic activity. Interacts with BECN1 and PGAM5. Interacts with IKZF3. Interacts with HEBP2. Interacts with BOP. Interacts with p53/TP53 and BBC3; interaction with BBC3 disrupts the interaction with p53/TP53. Interacts with DNM1L and CLTA; DNM1L and BCL2L1 may form a complex in synaptic vesicles that also contains clathrin and MFF. Interacts with ATP5F1A and ATP5F1B; the interactions mediate the association of BCL2L1 with the mitochondrial membrane ATP synthase F(1)F(0) ATP synthase. Interacts with VDAC1. Interacts (via the loop between motifs BH4 and BH3) with NLRP1 (via LRR repeats), but not with NLRP2, NLRP3, NLRP4, PYCARD, nor MEFV. Interacts with BCL2L11 (via BH3). Interacts with RNF183. Interacts with GIMAP3/IAN4. Interacts with GIMAP5 and HSPA8/HSC70; the interaction between HSPA8 and BCL2L1 is impaired in the absence of GIMAP5. Interacts with CLU (isoform 4); this interaction releases and activates BAX and promotes cell death. Post-translationally, proteolytically cleaved by caspases during apoptosis. The cleaved protein, lacking the BH4 motif, has pro-apoptotic activity. Phosphorylated on Ser-62 by CDK1. This phosphorylation is partial in normal mitotic cells, but complete in G2-arrested cells upon DNA-damage, thus promoting subsequent apoptosis probably by triggering caspases-mediated proteolysis. Phosphorylated by PLK3, leading to regulate the G2 checkpoint and progression to cytokinesis during mitosis. Phosphorylation at Ser-49 appears during the S phase and G2, disappears rapidly in early mitosis during prometaphase, metaphase and early anaphase, and re-appears during telophase and cytokinesis. In terms of processing, ubiquitinated by RNF183 during prolonged ER stress, leading to degradation by the proteosome.

It localises to the mitochondrion membrane. The protein resides in the nucleus membrane. Its subcellular location is the mitochondrion matrix. The protein localises to the cytoplasm. It is found in the cytoskeleton. It localises to the microtubule organizing center. The protein resides in the centrosome. Its subcellular location is the cytosol. The protein localises to the cytoplasmic vesicle. It is found in the secretory vesicle. It localises to the synaptic vesicle membrane. Its function is as follows. Potent inhibitor of cell death. Inhibits activation of caspases. Appears to regulate cell death by blocking the voltage-dependent anion channel (VDAC) by binding to it and preventing the release of the caspase activator, CYC1, from the mitochondrial membrane. Also acts as a regulator of G2 checkpoint and progression to cytokinesis during mitosis. Regulates presynaptic plasticity, including neurotransmitter release and recovery, number of axonal mitochondria as well as size and number of synaptic vesicle clusters. During synaptic stimulation, increases ATP availability from mitochondria through regulation of mitochondrial membrane ATP synthase F(1)F(0) activity and regulates endocytic vesicle retrieval in hippocampal neurons through association with DMN1L and stimulation of its GTPase activity in synaptic vesicles. May attenuate inflammation impairing NLRP1-inflammasome activation, hence CASP1 activation and IL1B release. This Sus scrofa (Pig) protein is Bcl-2-like protein 1 (BCL2L1).